Consider the following 131-residue polypeptide: Aspartate 1-decarboxylase (131 aa).

The active-site Schiff-base intermediate with substrate; via pyruvic acid is Ser25. At Ser25 the chain carries Pyruvic acid (Ser). Residue Thr57 coordinates substrate. The active-site Proton donor is the Tyr58. Residue 73–75 coordinates substrate; the sequence is GAA.

This sequence belongs to the PanD family. As to quaternary structure, heterooctamer of four alpha and four beta subunits. Pyruvate is required as a cofactor. Post-translationally, is synthesized initially as an inactive proenzyme, which is activated by self-cleavage at a specific serine bond to produce a beta-subunit with a hydroxyl group at its C-terminus and an alpha-subunit with a pyruvoyl group at its N-terminus.

It localises to the cytoplasm. The enzyme catalyses L-aspartate + H(+) = beta-alanine + CO2. Its pathway is cofactor biosynthesis; (R)-pantothenate biosynthesis; beta-alanine from L-aspartate: step 1/1. Functionally, catalyzes the pyruvoyl-dependent decarboxylation of aspartate to produce beta-alanine. In Acaryochloris marina (strain MBIC 11017), this protein is Aspartate 1-decarboxylase.